The sequence spans 239 residues: Vesicle-associated protein 1-3 (239 aa).

An N-acetylmethionine modification is found at Met-1. Position 2 is an N-acetylthreonine; in Vesicle-associated protein 1-3, N-terminally processed (Thr-2). At 2–215 (TTGDLVNIHP…RKETSKKQSG (214 aa)) the chain is on the cytoplasmic side. Residues 6 to 127 (LVNIHPTELK…EDFKLRVVYI (122 aa)) form the MSP domain. 2 positions are modified to phosphoserine: Ser-133 and Ser-164. Residues 179-214 (SMISKLTEEKTSATQQSQKLRLELEMLRKETSKKQS) are a coiled coil. The chain crosses the membrane as a helical; Anchor for type IV membrane protein span at residues 216–236 (GHSLLLMLLVGLLGCVIGYLL).

It belongs to the VAMP-associated protein (VAP) (TC 9.B.17) family.

The protein localises to the endoplasmic reticulum membrane. May play a role in vesicle trafficking. This chain is Vesicle-associated protein 1-3 (PVA13), found in Arabidopsis thaliana (Mouse-ear cress).